The chain runs to 291 residues: 4-diphosphocytidyl-2-C-methyl-D-erythritol kinase (291 aa).

Lys11 is an active-site residue. ATP is bound at residue 95–105 (PVAAGLAGGSS). Asp137 is an active-site residue.

This sequence belongs to the GHMP kinase family. IspE subfamily.

It carries out the reaction 4-CDP-2-C-methyl-D-erythritol + ATP = 4-CDP-2-C-methyl-D-erythritol 2-phosphate + ADP + H(+). It functions in the pathway isoprenoid biosynthesis; isopentenyl diphosphate biosynthesis via DXP pathway; isopentenyl diphosphate from 1-deoxy-D-xylulose 5-phosphate: step 3/6. In terms of biological role, catalyzes the phosphorylation of the position 2 hydroxy group of 4-diphosphocytidyl-2C-methyl-D-erythritol. In Alkaliphilus metalliredigens (strain QYMF), this protein is 4-diphosphocytidyl-2-C-methyl-D-erythritol kinase.